Reading from the N-terminus, the 370-residue chain is Quinolinate synthase (370 aa).

Iminosuccinate is bound by residues His62 and Ser83. Cys128 contacts [4Fe-4S] cluster. Iminosuccinate-binding positions include 154–156 (YAN) and Ser171. Cys215 serves as a coordination point for [4Fe-4S] cluster. Iminosuccinate contacts are provided by residues 241-243 (HPE) and Thr258. Residue Cys312 participates in [4Fe-4S] cluster binding.

Belongs to the quinolinate synthase family. Type 1 subfamily. [4Fe-4S] cluster serves as cofactor.

It is found in the cytoplasm. It carries out the reaction iminosuccinate + dihydroxyacetone phosphate = quinolinate + phosphate + 2 H2O + H(+). Its pathway is cofactor biosynthesis; NAD(+) biosynthesis; quinolinate from iminoaspartate: step 1/1. Its function is as follows. Catalyzes the condensation of iminoaspartate with dihydroxyacetone phosphate to form quinolinate. The polypeptide is Quinolinate synthase (Neisseria gonorrhoeae (strain ATCC 700825 / FA 1090)).